The primary structure comprises 153 residues: Superoxide dismutase [Cu-Zn] (153 aa).

Histidine 45, histidine 47, and histidine 62 together coordinate Cu cation. Cysteine 56 and cysteine 145 are joined by a disulfide. The Zn(2+) site is built by histidine 62, histidine 70, histidine 79, and aspartate 82. A Cu cation-binding site is contributed by histidine 119.

It belongs to the Cu-Zn superoxide dismutase family. In terms of assembly, homodimer. Requires Cu cation as cofactor. Zn(2+) serves as cofactor.

It localises to the cytoplasm. The enzyme catalyses 2 superoxide + 2 H(+) = H2O2 + O2. In terms of biological role, destroys radicals which are normally produced within the cells and which are toxic to biological systems. The protein is Superoxide dismutase [Cu-Zn] (Sod) of Chymomyza amoena.